The sequence spans 189 residues: UPF0494 membrane protein C977.06 (189 aa).

Helical transmembrane passes span 78-98, 120-140, and 148-168; these read WPLL…NFEV, IWGP…GLIY, and AIPL…VAMV.

Belongs to the UPF0494 family.

Its subcellular location is the membrane. The protein is UPF0494 membrane protein C977.06 of Schizosaccharomyces pombe (strain 972 / ATCC 24843) (Fission yeast).